The primary structure comprises 130 residues: Small ribosomal subunit protein uS9 (130 aa).

Positions 109 to 130 (RAKERKKYGLYGARRSPQFTKR) are disordered.

The protein belongs to the universal ribosomal protein uS9 family.

In Malacoplasma penetrans (strain HF-2) (Mycoplasma penetrans), this protein is Small ribosomal subunit protein uS9.